Consider the following 61-residue polypeptide: Small ribosomal subunit protein uS14 (61 aa).

Residues Cys-24, Cys-27, Cys-40, and Cys-43 each contribute to the Zn(2+) site.

Belongs to the universal ribosomal protein uS14 family. Zinc-binding uS14 subfamily. In terms of assembly, part of the 30S ribosomal subunit. Contacts proteins S3 and S10. The cofactor is Zn(2+).

Functionally, binds 16S rRNA, required for the assembly of 30S particles and may also be responsible for determining the conformation of the 16S rRNA at the A site. In Staphylococcus carnosus (strain TM300), this protein is Small ribosomal subunit protein uS14.